We begin with the raw amino-acid sequence, 852 residues long: Thrombospondin type-1 domain-containing protein 1 (852 aa).

The signal sequence occupies residues 1-24; that stretch reads MKPMLKDFSNLLLVVLCDYVLGEA. Topologically, residues 25-413 are extracellular; that stretch reads EYLLLREPGH…QPQGPVKSNN (389 aa). N-linked (GlcNAc...) asparagine glycosylation is found at Asn-39, Asn-53, Asn-58, Asn-69, Asn-80, Asn-135, and Asn-304. One can recognise a TSP type-1 domain in the interval 340-393; it reads TETWGLWQPWSQCSATCGDGVRERRRVCLTSFPSSPVCPGMSLEASLCSLEECA. 3 disulfide bridges follow: Cys-352/Cys-387, Cys-356/Cys-392, and Cys-367/Cys-377. The chain crosses the membrane as a helical span at residues 414–434; the sequence is IVTVTGISLCLFIIIATVLIT. The Cytoplasmic segment spans residues 435 to 852; it reads LWRRFGRPAK…STLSVEKLVI (418 aa). Disordered stretches follow at residues 444 to 517 and 624 to 799; these read KCST…ESFQ and LIRK…RKDK. Ser-463 is subject to Phosphoserine. Over residues 645–654 the composition is skewed to basic residues; the sequence is ARNAHFRRTA. The span at 655–669 shows a compositional bias: basic and acidic residues; it reads SFHEARQARPFRERS. Positions 670–685 are enriched in polar residues; it reads MSTLTPRQAPAYSSRT. A compositionally biased stretch (basic and acidic residues) spans 686-696; it reads RTCEQAEDRFR. 2 stretches are compositionally biased toward polar residues: residues 766 to 778 and 785 to 794; these read SHKS…SSPI and QRVSSLSPSQ.

In terms of assembly, part of a complex composed of THSD1, PTK2/FAK1, TLN1 and VCL. Interacts with TLN1.

The protein localises to the endosome membrane. It localises to the cell junction. Its subcellular location is the focal adhesion. It is found in the membrane. The protein resides in the secreted. Functionally, is a positive regulator of nascent focal adhesion assembly, involved in the modulation of endothelial cell attachment to the extracellular matrix. The chain is Thrombospondin type-1 domain-containing protein 1 (THSD1) from Homo sapiens (Human).